A 259-amino-acid polypeptide reads, in one-letter code: Bis(5'-nucleosyl)-tetraphosphatase, symmetrical (259 aa).

This sequence belongs to the Ap4A hydrolase family.

It carries out the reaction P(1),P(4)-bis(5'-adenosyl) tetraphosphate + H2O = 2 ADP + 2 H(+). Its function is as follows. Hydrolyzes diadenosine 5',5'''-P1,P4-tetraphosphate to yield ADP. This chain is Bis(5'-nucleosyl)-tetraphosphatase, symmetrical (apaH), found in Klebsiella aerogenes (Enterobacter aerogenes).